The primary structure comprises 212 residues: Lipopolysaccharide core heptose(II)-phosphate phosphatase (212 aa).

An N-terminal signal peptide occupies residues 1–32 (MSIGGVYELAFCRSSLKSKKYFIILLALAAIA).

The protein belongs to the phosphoglycerate mutase family. Ais subfamily.

The protein localises to the periplasm. It functions in the pathway bacterial outer membrane biogenesis; lipopolysaccharide metabolism. Functionally, catalyzes the dephosphorylation of heptose(II) of the outer membrane lipopolysaccharide core. This Shigella boydii serotype 4 (strain Sb227) protein is Lipopolysaccharide core heptose(II)-phosphate phosphatase.